Reading from the N-terminus, the 91-residue chain is Putative 26S proteasome complex subunit sem-1 (91 aa).

The disordered stretch occupies residues 1-73; it reads MASTQPKNDA…SWDDDDTSDD (73 aa). A compositionally biased stretch (basic and acidic residues) spans 8-28; sequence NDAKSTEPKPEQPVTEKKTAV. Composition is skewed to acidic residues over residues 29–48 and 63–72; these read LEED…AEDT and ESWDDDDTSD.

This sequence belongs to the DSS1/SEM1 family. Part of the 26S proteasome.

In terms of biological role, subunit of the 26S proteasome which plays a role in ubiquitin-dependent proteolysis. This Neurospora crassa (strain ATCC 24698 / 74-OR23-1A / CBS 708.71 / DSM 1257 / FGSC 987) protein is Putative 26S proteasome complex subunit sem-1 (sem-1).